We begin with the raw amino-acid sequence, 242 residues long: uncharacterized protein (242 aa).

Residues 2–69 form the S4 RNA-binding domain; it reads YRLAKIISNA…KPRLWIYYKP (68 aa). Asp102 (nucleophile) is an active-site residue.

Belongs to the pseudouridine synthase RsuA family.

It carries out the reaction a uridine in RNA = a pseudouridine in RNA. This is an uncharacterized protein from Rickettsia typhi (strain ATCC VR-144 / Wilmington).